Reading from the N-terminus, the 328-residue chain is Phenylalanine--tRNA ligase alpha subunit (328 aa).

Mg(2+) is bound at residue E253.

This sequence belongs to the class-II aminoacyl-tRNA synthetase family. Phe-tRNA synthetase alpha subunit type 1 subfamily. As to quaternary structure, tetramer of two alpha and two beta subunits. Requires Mg(2+) as cofactor.

It localises to the cytoplasm. It catalyses the reaction tRNA(Phe) + L-phenylalanine + ATP = L-phenylalanyl-tRNA(Phe) + AMP + diphosphate + H(+). This Coxiella burnetii (strain Dugway 5J108-111) protein is Phenylalanine--tRNA ligase alpha subunit.